The chain runs to 887 residues: MTNNCKITFKNQLKALLGKAILLKKKKRKETITEFTQGIQYIIVLVILHYTIPNVITLNTYSPVGLGYPTSGFPLCYVSNVPFNQTSNLHLLLNSTQLPISQIVQFPNEQSLIDSYKSNPQSITYGISFNNIDYQNNILDYNILLNSTFQNTQLISIVQNLFLSTFAEIKGITTTTTTTLSSIEEFPNLTSSVSVSSYLYVIYLPLLFLFSLQQLLVTSVTERKNHIKEVMKVMGLKELVYWVTIIIVQTITNVINILLVMVVLYFTKTLTTSLNPVMLFLQFLLYSFSMVAIGIILSNLVDTPKTASAISSFLLLILVGVSCFYQFYLKSKTSSSWLRSILFLFSPCAFGEFLYKMGNDQQMMLTTNWSDPQVKISFLFLIIDIFLYFTIAWYITELYKDNTDENSITKSFTFFLSLSYWKSIFNLRSSSSSSSLPLLNNNNNCNNNNTSPSSSSSSQSSPLNKPLLSGDSDDDENDIGIRLVNLKKTYKNPITKETVNAVNDVSYTIKKGTILALLGQNGSGKTSTIGMLNGMRSPSSGDAFINGLSIKYDMDKIRENGIGLCHQSNILYDEFTCAEHIALYSRLKGLFVDGGGANGDNKRIMMDNFIMESLGEVNLVDKKDTQSIKLSGGMKRRLCLAISLIGNPSILLLDEPSSGLDSLSQHMICELLQRKKPNKTIILTTHNLDSAELLGDKICIMTSGKVKAMGSSLELKNQFNLGYILTIVYDKSLSLLQPPNINQQFESFFFNKFNDSTQSKQNLKNIQSFYNIFNNNNNENNSNNSDGSSSSSDSSSSKDVLLNIKNNNNNNNNNEERGFSSGQRDLELEYSLTHQSTDVITEFLEELESRQDEFKIKRISMSMTTLDEVFLKVSEEETINKNKQPTS.

Transmembrane regions (helical) follow at residues 38 to 58 (GIQYIIVLVILHYTIPNVITL), 198 to 218 (YLYVIYLPLLFLFSLQQLLVT), 245 to 265 (IIIVQTITNVINILLVMVVLY), 277 to 297 (VMLFLQFLLYSFSMVAIGIIL), 309 to 329 (AISSFLLLILVGVSCFYQFYL), 335 to 355 (SSWLRSILFLFSPCAFGEFLY), and 376 to 396 (ISFLFLIIDIFLYFTIAWYIT). The segment covering 443–469 (NNCNNNNTSPSSSSSSQSSPLNKPLLS) has biased composition (low complexity). The segment at 443 to 474 (NNCNNNNTSPSSSSSSQSSPLNKPLLSGDSDD) is disordered. In terms of domain architecture, ABC transporter spans 481–728 (IRLVNLKKTY…FNLGYILTIV (248 aa)). Position 519-526 (519-526 (GQNGSGKT)) interacts with ATP. Positions 774–797 (NNNNNENNSNNSDGSSSSSDSSSS) are enriched in low complexity. The tract at residues 774 to 799 (NNNNNENNSNNSDGSSSSSDSSSSKD) is disordered.

Belongs to the ABC transporter superfamily. ABCA family.

It is found in the membrane. This is ABC transporter A family member 10 (abcA10) from Dictyostelium discoideum (Social amoeba).